Here is a 331-residue protein sequence, read N- to C-terminus: Tungstate uptake system ATP-binding protein TupC (331 aa).

The region spanning 2-230 (IEISNLFFNY…NQGVKFCNFI (229 aa)) is the ABC transporter domain. Position 34-41 (34-41 (GANGSGKS)) interacts with ATP.

This sequence belongs to the ABC transporter superfamily. In terms of assembly, the complex is composed of two ATP-binding proteins (TupC), two transmembrane proteins (TupB) and a solute-binding protein (TupA).

The enzyme catalyses tungstate(in) + ATP + H2O = tungstate(out) + ADP + phosphate + H(+). In terms of biological role, part of an ABC transporter complex involved in ultra-high affinity tungstate uptake. Probably responsible for energy coupling to the transport system. This chain is Tungstate uptake system ATP-binding protein TupC, found in Campylobacter jejuni subsp. jejuni serotype O:2 (strain ATCC 700819 / NCTC 11168).